The chain runs to 157 residues: 2-C-methyl-D-erythritol 2,4-cyclodiphosphate synthase (157 aa).

The a divalent metal cation site is built by Asp9 and His11. Residues 9-11 (DVH) and 35-36 (HS) contribute to the 4-CDP-2-C-methyl-D-erythritol 2-phosphate site. His43 is an a divalent metal cation binding site. Residues 57-59 (DIG), 62-66 (FPETD), 133-136 (TTME), Phe140, and Lys143 each bind 4-CDP-2-C-methyl-D-erythritol 2-phosphate.

This sequence belongs to the IspF family. As to quaternary structure, homotrimer. It depends on a divalent metal cation as a cofactor.

It carries out the reaction 4-CDP-2-C-methyl-D-erythritol 2-phosphate = 2-C-methyl-D-erythritol 2,4-cyclic diphosphate + CMP. The protein operates within isoprenoid biosynthesis; isopentenyl diphosphate biosynthesis via DXP pathway; isopentenyl diphosphate from 1-deoxy-D-xylulose 5-phosphate: step 4/6. In terms of biological role, involved in the biosynthesis of isopentenyl diphosphate (IPP) and dimethylallyl diphosphate (DMAPP), two major building blocks of isoprenoid compounds. Catalyzes the conversion of 4-diphosphocytidyl-2-C-methyl-D-erythritol 2-phosphate (CDP-ME2P) to 2-C-methyl-D-erythritol 2,4-cyclodiphosphate (ME-CPP) with a corresponding release of cytidine 5-monophosphate (CMP). This is 2-C-methyl-D-erythritol 2,4-cyclodiphosphate synthase from Enterococcus faecalis (strain ATCC 700802 / V583).